The following is a 348-amino-acid chain: Pheromone P-factor receptor (348 aa).

Helical transmembrane passes span 46 to 69 (LLTG…VCLL), 79 to 103 (VFVF…TICS), 125 to 141 (VFNI…IFTA), 162 to 180 (IMTV…FWIT), 207 to 225 (YFIA…SGVF), 249 to 267 (CILV…FTII), and 283 to 301 (CLLI…STAL).

Belongs to the G-protein coupled receptor 4 family.

It is found in the membrane. Receptor for the peptide pheromone P-factor, a mating factor of S.pombe. Pheromone signaling is essential for initiation of meiosis in S.pombe; P-factor signaling alone may be sufficient. The chain is Pheromone P-factor receptor (mam2) from Schizosaccharomyces pombe (strain 972 / ATCC 24843) (Fission yeast).